The primary structure comprises 270 residues: ATP synthase subunit a (270 aa).

5 helical membrane passes run 38–58 (VHID…GIFY), 98–118 (IAPL…MDLV), 143–163 (DVNI…YYSI), 208–228 (LFGN…MLPW), and 239–259 (AIFH…LTIV).

Belongs to the ATPase A chain family. As to quaternary structure, F-type ATPases have 2 components, CF(1) - the catalytic core - and CF(0) - the membrane proton channel. CF(1) has five subunits: alpha(3), beta(3), gamma(1), delta(1), epsilon(1). CF(0) has three main subunits: a(1), b(2) and c(9-12). The alpha and beta chains form an alternating ring which encloses part of the gamma chain. CF(1) is attached to CF(0) by a central stalk formed by the gamma and epsilon chains, while a peripheral stalk is formed by the delta and b chains.

The protein resides in the cell inner membrane. Functionally, key component of the proton channel; it plays a direct role in the translocation of protons across the membrane. This is ATP synthase subunit a from Vibrio parahaemolyticus serotype O3:K6 (strain RIMD 2210633).